The sequence spans 512 residues: 2,3-bisphosphoglycerate-independent phosphoglycerate mutase (512 aa).

Residues Asp11 and Ser61 each contribute to the Mn(2+) site. Ser61 functions as the Phosphoserine intermediate in the catalytic mechanism. Substrate contacts are provided by residues His122, 152–153 (RD), Arg184, Arg190, 259–262 (RADR), and Lys332. Positions 399, 403, 440, 441, and 459 each coordinate Mn(2+).

The protein belongs to the BPG-independent phosphoglycerate mutase family. As to quaternary structure, monomer. The cofactor is Mn(2+).

The enzyme catalyses (2R)-2-phosphoglycerate = (2R)-3-phosphoglycerate. It functions in the pathway carbohydrate degradation; glycolysis; pyruvate from D-glyceraldehyde 3-phosphate: step 3/5. Catalyzes the interconversion of 2-phosphoglycerate and 3-phosphoglycerate. The sequence is that of 2,3-bisphosphoglycerate-independent phosphoglycerate mutase from Francisella tularensis subsp. novicida (strain U112).